Here is a 337-residue protein sequence, read N- to C-terminus: tRNA N6-adenosine threonylcarbamoyltransferase (337 aa).

Positions 111 and 115 each coordinate Fe cation. Substrate-binding positions include 134-138 (LVSGG), D167, G180, and N272. Residue D300 participates in Fe cation binding.

This sequence belongs to the KAE1 / TsaD family. Requires Fe(2+) as cofactor.

It is found in the cytoplasm. It catalyses the reaction L-threonylcarbamoyladenylate + adenosine(37) in tRNA = N(6)-L-threonylcarbamoyladenosine(37) in tRNA + AMP + H(+). Required for the formation of a threonylcarbamoyl group on adenosine at position 37 (t(6)A37) in tRNAs that read codons beginning with adenine. Is involved in the transfer of the threonylcarbamoyl moiety of threonylcarbamoyl-AMP (TC-AMP) to the N6 group of A37, together with TsaE and TsaB. TsaD likely plays a direct catalytic role in this reaction. This is tRNA N6-adenosine threonylcarbamoyltransferase from Methylococcus capsulatus (strain ATCC 33009 / NCIMB 11132 / Bath).